We begin with the raw amino-acid sequence, 559 residues long: ATP synthase subunit beta-3, mitochondrial (559 aa).

Low complexity predominate over residues 1–28 (MASRRILSSLLRSSSSRSTSKSSLIGSR). Residues 1 to 39 (MASRRILSSLLRSSSSRSTSKSSLIGSRNPRLLSPGPAH) are disordered. The N-terminal 54 residues, 1–54 (MASRRILSSLLRSSSSRSTSKSSLIGSRNPRLLSPGPAHGAAPCGTLLGRVAEY), are a transit peptide targeting the mitochondrion. At Ser62 the chain carries Phosphoserine. 234–241 (GGAGVGKT) is a binding site for ATP.

This sequence belongs to the ATPase alpha/beta chains family. As to quaternary structure, F-type ATPases have 2 components, CF(1) - the catalytic core - and CF(0) - the membrane proton channel. CF(1) has five subunits: alpha(3), beta(3), gamma(1), delta(1), epsilon(1). CF(0) has three main subunits: a, b and c.

It is found in the mitochondrion. The protein resides in the mitochondrion inner membrane. The catalysed reaction is ATP + H2O + 4 H(+)(in) = ADP + phosphate + 5 H(+)(out). In terms of biological role, mitochondrial membrane ATP synthase (F(1)F(0) ATP synthase or Complex V) produces ATP from ADP in the presence of a proton gradient across the membrane which is generated by electron transport complexes of the respiratory chain. F-type ATPases consist of two structural domains, F(1) - containing the extramembraneous catalytic core, and F(0) - containing the membrane proton channel, linked together by a central stalk and a peripheral stalk. During catalysis, ATP synthesis in the catalytic domain of F(1) is coupled via a rotary mechanism of the central stalk subunits to proton translocation. Subunits alpha and beta form the catalytic core in F(1). Rotation of the central stalk against the surrounding alpha(3)beta(3) subunits leads to hydrolysis of ATP in three separate catalytic sites on the beta subunits. The protein is ATP synthase subunit beta-3, mitochondrial of Arabidopsis thaliana (Mouse-ear cress).